Reading from the N-terminus, the 289-residue chain is Thiosulfate sulfurtransferase (289 aa).

One can recognise a Rhodanese 1 domain in the interval 24–142 (VGAGLRVLDA…WVKEGHPVTA (119 aa)). Residues 143–158 (EPSQPAEAVFKAKLDK) form a hinge region. A Rhodanese 2 domain is found at 172–284 (GSKKFQVVDS…WFHRAPPQYK (113 aa)). A substrate-binding site is contributed by arginine 186. Residue cysteine 244 is the Cysteine persulfide intermediate of the active site. Lysine 246 contacts substrate.

As to quaternary structure, monomer. In terms of tissue distribution, expressed in numerous tissues.

The protein resides in the mitochondrion matrix. It catalyses the reaction thiosulfate + hydrogen cyanide = thiocyanate + sulfite + 2 H(+). Together with MRPL18, acts as a mitochondrial import factor for the cytosolic 5S rRNA. Only the nascent unfolded cytoplasmic form is able to bind to the 5S rRNA. Formation of iron-sulfur complexes and cyanide detoxification. This Gallus gallus (Chicken) protein is Thiosulfate sulfurtransferase (TST).